The primary structure comprises 444 residues: Glutamate-1-semialdehyde 2,1-aminomutase (444 aa).

At Lys278 the chain carries N6-(pyridoxal phosphate)lysine.

This sequence belongs to the class-III pyridoxal-phosphate-dependent aminotransferase family. HemL subfamily. In terms of assembly, homodimer. It depends on pyridoxal 5'-phosphate as a cofactor.

It localises to the cytoplasm. The catalysed reaction is (S)-4-amino-5-oxopentanoate = 5-aminolevulinate. The protein operates within porphyrin-containing compound metabolism; protoporphyrin-IX biosynthesis; 5-aminolevulinate from L-glutamyl-tRNA(Glu): step 2/2. This Deinococcus radiodurans (strain ATCC 13939 / DSM 20539 / JCM 16871 / CCUG 27074 / LMG 4051 / NBRC 15346 / NCIMB 9279 / VKM B-1422 / R1) protein is Glutamate-1-semialdehyde 2,1-aminomutase.